The following is a 394-amino-acid chain: Gastricsin (394 aa).

An N-terminal signal peptide occupies residues 1-16 (MKWMVVVLLCLPLLEA). The propeptide at 17-65 (TQIKVPLKKIKSIREVLREKGLLGDFLKNHKPQHARKFFRNRLAKTGDF) is activation peptide. Residues 79–391 (YFGQISLGTP…DLANNRVGFA (313 aa)) form the Peptidase A1 domain. Asp97 is a catalytic residue. Cystine bridges form between Cys110–Cys115 and Cys273–Cys277. The active site involves Thr283. Cys316 and Cys349 are joined by a disulfide.

The protein belongs to the peptidase A1 family.

It is found in the secreted. It carries out the reaction More restricted specificity than pepsin A, but shows preferential cleavage at Tyr-|-Xaa bonds. High activity on hemoglobin.. In terms of biological role, hydrolyzes a variety of proteins. The sequence is that of Gastricsin (PGC) from Cavia porcellus (Guinea pig).